The chain runs to 1193 residues: MRFVQGNIMPGKLVGSPKGAARTGTQAIAHAGDHSDLDEPKPKIAKSDPPSTAIPKKNNFKQREGTKNVKPPTLEEMKELRDTQNLFHSNLFKLQVKEMLEELQLKQKYTDFIENWLESFTAFTRQLKDGLMERTHLEVPMKLSEKPTGFVFSKPTREPYLIGAAATGTLLGPKIVVDVALEMPKESLHKEDYLNLRYDQKRALYLTYVTERMMESPDYAEDQFNFNYYANNPLKPVLELIPVTKQVNKHLQVRLFITAPLSSFKPGRFVPWNNNIRPSFYGDEWDEKDPLPSTQHYNANVLFDLTLSENQAQLDKAFKSRRNFQDGLLLLKVWLRQRQLDIGYSGFGAHILAAFIVYLNTQRILHQSSSSYQVARTVWNQLANTDWTKGISLSVAPIQTEELNKFAEHYDVCFIDFTGQHNLCANIPLYLYQRVREEAKLAVELLNDMKLNSFPLIFMQKCPLYSRVDNILKISNYSCINQMLTLHSHPRIKYDFANYGYPQLLHLLTELLKKGLAERVHSILPLETATAAWPVEKKAPVIGKYIQLGLILQPEHAYQVLNKGPAANDDHEGAEEFRRFWGEKSNLRRFQDGSITEAVVWGTAQDSPAKKRLIVRQIVLHLLEHHLQLDSKEVQYIGGELDQVYQLSPWFKVNKLKTKLPLGQDTDAEALSPHVIRCYDELARQLHGLNDLPLEIVSISGVSPIFRYCEPQPVLPQALLVENRILASSIQRVVIQLGQSGKWPTELGALRALKTAFLIEIGEKLEAQCRLHWVMSADGLLVLKQGYCFLIELAHNKELALLKQEVTERGITTYIDNAASRSLERQHYILPKVSGALHSLHQTYSAFGSTVLLAKRWLATQLLDDGLWPDMATELLVAHLFQQRYAPQSIAAPQTGFIRFLQLLSHSDFNGELFLLNFNNSWQEQQIADLEHNYRSNRQSYPPLAVATSYDMQHAGRLWTSDQSPSQRVLGHVTRLARHALEIIETSLMSKDLRFVRPAQLFRASNEGYDLVIQFKPDLVPNSLSYDLGSPFVSFSQPNFSLPRAGSDYIARIVGLLRSAYSDFAAFFYNPHGGKELGIVWRPPTEFAAKPFKVTELQACSPCGNKKVQVLKETLLEDFKLLLKDFYLRIATPEELKREQREHQKPMRYFDANKAEEESKPKPKKHRQRKGTGKKALPKRKRLIKSSTLKVLK.

Disordered regions lie at residues 1-69 and 1137-1193; these read MRFV…TKNV and KREQ…KVLK. 2 stretches are compositionally biased toward basic and acidic residues: residues 31 to 46 and 1151 to 1161; these read AGDHSDLDEPKPKIAK and DANKAEEESKP. Ser35 carries the phosphoserine modification. Basic residues predominate over residues 1162-1184; sequence KPKKHRQRKGTGKKALPKRKRLI.

Belongs to the NRAP family. In terms of assembly, part of the small subunit (SSU) processome, composed of more than 70 proteins and the RNA chaperone small nucleolar RNA (snoRNA) U3. Expressed in nurse cells at stages 9-10 of oogenesis and exported to the oocyte.

The protein resides in the nucleus. The protein localises to the nucleolus. It localises to the chromosome. Part of the small subunit (SSU) processome, first precursor of the small eukaryotic ribosomal subunit. During the assembly of the SSU processome in the nucleolus, many ribosome biogenesis factors, an RNA chaperone and ribosomal proteins associate with the nascent pre-rRNA and work in concert to generate RNA folding, modifications, rearrangements and cleavage as well as targeted degradation of pre-ribosomal RNA by the RNA exosome. The protein is Nucleolar protein 6 of Drosophila melanogaster (Fruit fly).